Consider the following 224-residue polypeptide: Probable GTP-binding protein EngB (224 aa).

Positions 27–201 (SGIEVAFAGR…DAIICQWLEQ (175 aa)) constitute an EngB-type G domain. GTP contacts are provided by residues 35 to 42 (GRSNAGKS), 62 to 66 (GRTQL), 80 to 83 (DLPG), 147 to 150 (TKCD), and 180 to 182 (FSS). Residues Ser-42 and Thr-64 each coordinate Mg(2+). Positions 205-224 (EYELPEEDDFDDSDEFTEEE) are disordered.

This sequence belongs to the TRAFAC class TrmE-Era-EngA-EngB-Septin-like GTPase superfamily. EngB GTPase family. It depends on Mg(2+) as a cofactor.

In terms of biological role, necessary for normal cell division and for the maintenance of normal septation. The chain is Probable GTP-binding protein EngB from Colwellia psychrerythraea (strain 34H / ATCC BAA-681) (Vibrio psychroerythus).